Consider the following 377-residue polypeptide: MLWTRALILELKTNKQSRLLWLLAIPLLISLTLLTYGLVLFSSSGRIDHGDHFHLRERFVLTTEELVTFVVASVVFALTVALFGLGCWKLLQGPKVDRTNIKLANSNPAPQAVVLQADCDHFQVGDHCVFSAEKQHFKQQFKQDFLGKSKFSFRNELYRFCLIGVLISLNLALSMVEIPGIVLPWGSSIQFRFFNTAILFIAIRFVGLLSTSLIAIITPWIHLLLHPVHTPISTVFYMGNDLVVLWIFYFFYYHIFKAEVKQTTTVVNNKEFSQLVNTHKTKVAKALALIPVNLICGFIEGLGFYVGYFLILGKFGSVGHKIFYDSQANRDLINSANVIYFLLTTTTIFSLKYLFELLFFYSVEKGILNISRHFGLY.

7 helical membrane passes run 21–41, 66–86, 163–183, 197–217, 236–256, 292–312, and 339–359; these read WLLAIPLLISLTLLTYGLVLF, LVTFVVASVVFALTVALFGLG, IGVLISLNLALSMVEIPGIVL, AILFIAIRFVGLLSTSLIAII, FYMGNDLVVLWIFYFFYYHIF, VNLICGFIEGLGFYVGYFLIL, and IYFLLTTTTIFSLKYLFELLF.

The protein resides in the cell membrane. This is an uncharacterized protein from Mycoplasma pneumoniae (strain ATCC 29342 / M129 / Subtype 1) (Mycoplasmoides pneumoniae).